A 278-amino-acid chain; its full sequence is Transmembrane protein 45B (278 aa).

The next 7 helical transmembrane spans lie at 7–27, 49–69, 95–115, 117–137, 149–169, 183–203, and 215–235; these read HALP…KYPL, IIEG…EQFV, YLFF…FNIV, LGLD…LFYF, IHSL…LEVI, LLIL…PPFG, and VMFI…ITAI. Phosphoserine occurs at positions 273 and 275.

It belongs to the TMEM45 family.

The protein resides in the endosome membrane. The protein localises to the lysosome membrane. It localises to the golgi apparatus. It is found in the trans-Golgi network membrane. Its function is as follows. Plays a role in innate immunity. This is Transmembrane protein 45B (Tmem45b) from Rattus norvegicus (Rat).